We begin with the raw amino-acid sequence, 1442 residues long: Death-associated protein kinase 1 (1442 aa).

The 263-residue stretch at 13–275 folds into the Protein kinase domain; that stretch reads YDTGEELGSG…IQDSLQHPWI (263 aa). ATP-binding positions include 19–27 and Lys-42; that span reads LGSGQFAVV. The Proton acceptor role is filled by Asp-139. Residues 267–334 are calmodulin-binding; it reads QDSLQHPWIK…RSNMSVARSD (68 aa). Phosphoserine; by RPS6KA1 and RPS6KA3 is present on Ser-289. An autoinhibitory domain region spans residues 292–301; sequence NMEKFKKFAA. At Ser-308 the chain carries Phosphoserine; by autocatalysis. 2 positions are modified to phosphoserine: Ser-319 and Ser-333. ANK repeat units lie at residues 378–407, 411–440, 444–473, 477–506, 510–539, 543–572, 576–605, and 609–638; these read HGTP…RIDV, GGSN…PLDV, SGET…NPDF, EEET…NVNI, EGET…DLNA, DGHI…FVDF, HGNT…NLDI, and YGRT…NVEA. A Roc domain is found at 681–955; that stretch reads TQNLQPRIKL…NHLQEIRSQI (275 aa). At Ser-734 the chain carries Phosphoserine; by MAPK1. An ANK 9 repeat occupies 875-904; that stretch reads KLKNPLRVVLVATHADIMNIPRPAGGEFGY. Ser-1115 bears the Phosphoserine mark. An ANK 10 repeat occupies 1164–1196; it reads DADIRLWVSGCRIANRGAELLVLLVNHGQGIEV. The Death domain maps to 1312 to 1396; it reads KLSRLLDPPD…DAADFLLKAS (85 aa). Residue Ser-1433 is modified to Phosphoserine.

It belongs to the protein kinase superfamily. CAMK Ser/Thr protein kinase family. DAP kinase subfamily. As to quaternary structure, interacts with KLHL20. Interacts (via death domain) with MAPK1 and MAPK3. Interacts with MAP1B (via N-terminus). Interacts with PRKD1 in an oxidative stress-regulated manner. Interacts with PIN1, PDCD6, BECN1, TSC2 and STX1A. Interacts (via kinase domain) with DAPK3 (via kinase domain). Interacts with GRINB. Interacts (via death domain) with UNC5B (via death domain). Interacts with UNC5C (via death domain). It depends on Mg(2+) as a cofactor. Post-translationally, ubiquitinated by the BCR(KLHL20) E3 ubiquitin ligase complex, leading to its degradation by the proteasome. In response to mitogenic stimulation (PMA or EGF), phosphorylated at Ser-289; phosphorylation suppresses DAPK1 pro-apoptotic function. Autophosphorylation at Ser-308 inhibits its catalytic activity. Phosphorylation at Ser-734 by MAPK1 increases its catalytic activity and promotes cytoplasmic retention of MAPK1. Endoplasmic-stress can cause dephosphorylation at Ser-308. High levels in bladder, uterus, vas deferens, lung, liver and kidney.

It carries out the reaction L-seryl-[protein] + ATP = O-phospho-L-seryl-[protein] + ADP + H(+). The enzyme catalyses L-threonyl-[protein] + ATP = O-phospho-L-threonyl-[protein] + ADP + H(+). With respect to regulation, activated by Ca(2+)/calmodulin. Regulated by a locking mechanism, involving autophosphorylation at Ser-308 and calmodulin binding. In the inactive state, Ser-308 is phosphorylated. Activation involves its dephosphorylation and a release-of-autoinhibition mechanism where binding of calmodulin induces a conformational change that relieves the steric block of the active site by the autoinhibitory domain. Activity is modulated by UNC5B and NTN1. UNC5B activates it by inhibiting the phosphorylation at Ser-308, whereas NTN1 inhibits UNC5B-mediated activation of DAPK1. Endoplasmic-stress activates by causing Ser-308 dephosphorylation. In terms of biological role, calcium/calmodulin-dependent serine/threonine kinase involved in multiple cellular signaling pathways that trigger cell survival, apoptosis, and autophagy. Regulates both type I apoptotic and type II autophagic cell deaths signal, depending on the cellular setting. The former is caspase-dependent, while the latter is caspase-independent and is characterized by the accumulation of autophagic vesicles. Phosphorylates PIN1 resulting in inhibition of its catalytic activity, nuclear localization, and cellular function. Phosphorylates TPM1, enhancing stress fiber formation in endothelial cells. Phosphorylates STX1A and significantly decreases its binding to STXBP1. Phosphorylates PRKD1 and regulates JNK signaling by binding and activating PRKD1 under oxidative stress. Phosphorylates BECN1, reducing its interaction with BCL2 and BCL2L1 and promoting the induction of autophagy. Phosphorylates TSC2, disrupting the TSC1-TSC2 complex and stimulating mTORC1 activity in a growth factor-dependent pathway. Phosphorylates RPS6, MYL9 and DAPK3. Acts as a signaling amplifier of NMDA receptors at extrasynaptic sites for mediating brain damage in stroke. Cerebral ischemia recruits DAPK1 into the NMDA receptor complex and it phosphorylates GRINB at Ser-1303 inducing injurious Ca(2+) influx through NMDA receptor channels, resulting in an irreversible neuronal death. Required together with DAPK3 for phosphorylation of RPL13A upon interferon-gamma activation which is causing RPL13A involvement in transcript-selective translation inhibition. This Mus musculus (Mouse) protein is Death-associated protein kinase 1 (Dapk1).